Consider the following 376-residue polypeptide: 1-deoxy-D-xylulose 5-phosphate reductoisomerase (376 aa).

NADPH-binding residues include serine 10, glycine 11, serine 12, valine 13, glycine 36, lysine 37, asparagine 38, and asparagine 118. Lysine 119 provides a ligand contact to 1-deoxy-D-xylulose 5-phosphate. Glutamate 120 contacts NADPH. Aspartate 144 lines the Mn(2+) pocket. The 1-deoxy-D-xylulose 5-phosphate site is built by serine 145, glutamate 146, serine 170, and histidine 193. Glutamate 146 serves as a coordination point for Mn(2+). An NADPH-binding site is contributed by glycine 199. 1-deoxy-D-xylulose 5-phosphate is bound by residues serine 206, asparagine 211, lysine 212, and glutamate 215. Glutamate 215 provides a ligand contact to Mn(2+).

This sequence belongs to the DXR family. The cofactor is Mg(2+). It depends on Mn(2+) as a cofactor.

It carries out the reaction 2-C-methyl-D-erythritol 4-phosphate + NADP(+) = 1-deoxy-D-xylulose 5-phosphate + NADPH + H(+). Its pathway is isoprenoid biosynthesis; isopentenyl diphosphate biosynthesis via DXP pathway; isopentenyl diphosphate from 1-deoxy-D-xylulose 5-phosphate: step 1/6. Its function is as follows. Catalyzes the NADPH-dependent rearrangement and reduction of 1-deoxy-D-xylulose-5-phosphate (DXP) to 2-C-methyl-D-erythritol 4-phosphate (MEP). This is 1-deoxy-D-xylulose 5-phosphate reductoisomerase from Macrococcus caseolyticus (strain JCSC5402) (Macrococcoides caseolyticum).